The following is a 132-amino-acid chain: Agouti-signaling protein (132 aa).

An N-terminal signal peptide occupies residues 1–22 (MDVTRLLLATLLVFLCFFTANS). The N-linked (GlcNAc...) asparagine glycan is linked to asparagine 39. The tract at residues 61–87 (QIGRKEAEKKRSSKKEASMKKVARPRT) is disordered. Basic and acidic residues predominate over residues 63-79 (GRKEAEKKRSSKKEASM). Cystine bridges form between cysteine 93-cysteine 108, cysteine 100-cysteine 114, cysteine 107-cysteine 125, cysteine 111-cysteine 132, and cysteine 116-cysteine 123. Residues 93 to 132 (CVATRNSCKPPAPACCDPCASCQCRFFRSACSCRVLSLNC) form the Agouti domain.

Its subcellular location is the secreted. In terms of biological role, involved in the regulation of melanogenesis. The binding of ASP to MC1R precludes alpha-MSH initiated signaling and thus blocks production of cAMP, leading to a down-regulation of eumelanogenesis (brown/black pigment) and thus increasing synthesis of pheomelanin (yellow/red pigment). In Gorilla gorilla gorilla (Western lowland gorilla), this protein is Agouti-signaling protein (ASIP).